We begin with the raw amino-acid sequence, 202 residues long: Syndecan-4 (202 aa).

Residues 1 to 23 (MAPVCLFAPLLLLLLGGFPVAPG) form the signal peptide. Residues 24–149 (ESIRETEVID…QGSNIFERTE (126 aa)) lie on the Extracellular side of the membrane. Disordered regions lie at residues 42 to 76 (YFSG…TEEP) and 89 to 138 (LDNH…MSST). O-linked (Xyl...) (glycosaminoglycan) serine glycosylation occurs at Ser-44. Over residues 48–62 (PDDEDAGGLEQDSDF) the composition is skewed to acidic residues. Ser-65 and Ser-67 each carry an O-linked (Xyl...) (glycosaminoglycan) serine glycan. Over residues 105-121 (SEPKELEENEVIPKRVP) the composition is skewed to basic and acidic residues. Residues 150–174 (VLAALIVGGVVGILFAVFLILLLVY) traverse the membrane as a helical segment. The Cytoplasmic portion of the chain corresponds to 175 to 202 (RMKKKDEGSYDLGKKPIYKKAPTNEFYA).

This sequence belongs to the syndecan proteoglycan family. In terms of assembly, homodimer. Interacts with CDCP1 and SDCBP. Interacts (via its cytoplasmic domain) with GIPC (via its PDZ domain). Interacts (via its cytoplasmic domain) with NUDT16L1. Interacts with DNM2; this interaction is markedly enhanced at focal ahesion site upon induction of focal adhesions and stress-fiber formation. Shedding is enhanced by a number of factors such as heparanase, thrombin or EGF. Also by stress and wound healing. PMA-mediated shedding is inhibited by TIMP3. Post-translationally, O-glycosylated; contains both chondroitin sulfate and heparan sulfate. Ser-44, Ser-65 and Ser-67 can all be modified by either chondroitin sulfate or heparan sulfate, and the protein exists in forms that contain only chondroitin sulfate, only heparan sulfate and both chondroitin sulfate and heparan sulfate.

Its subcellular location is the membrane. It is found in the secreted. Cell surface proteoglycan which regulates exosome biogenesis in concert with SDCBP and PDCD6IP. The protein is Syndecan-4 of Rattus norvegicus (Rat).